Here is a 258-residue protein sequence, read N- to C-terminus: Indole-3-glycerol phosphate synthase (258 aa).

Belongs to the TrpC family.

It carries out the reaction 1-(2-carboxyphenylamino)-1-deoxy-D-ribulose 5-phosphate + H(+) = (1S,2R)-1-C-(indol-3-yl)glycerol 3-phosphate + CO2 + H2O. The protein operates within amino-acid biosynthesis; L-tryptophan biosynthesis; L-tryptophan from chorismate: step 4/5. The polypeptide is Indole-3-glycerol phosphate synthase (Chlorobium limicola (strain DSM 245 / NBRC 103803 / 6330)).